A 958-amino-acid polypeptide reads, in one-letter code: Glucoamylase 1 (958 aa).

The signal sequence occupies residues 1 to 22; sequence MIFLKLIKSIVIGLGLVSAIQA. 6 N-linked (GlcNAc...) asparagine glycosylation sites follow: Asn61, Asn78, Asn107, Asn197, Asn403, and Asn416. Catalysis depends on residues Asp470 and Glu473. 3 N-linked (GlcNAc...) asparagine glycosylation sites follow: Asn513, Asn580, and Asn602. The active-site Proton donor is the Asp638. Residues Asn813 and Asn907 are each glycosylated (N-linked (GlcNAc...) asparagine).

Belongs to the glycosyl hydrolase 31 family.

It catalyses the reaction Hydrolysis of terminal (1-&gt;4)-linked alpha-D-glucose residues successively from non-reducing ends of the chains with release of beta-D-glucose.. In terms of biological role, this glucoamylase has a specificity toward both alpha-1,4 and alpha-1,6 linkages. This chain is Glucoamylase 1 (GAM1), found in Schwanniomyces occidentalis (Yeast).